A 282-amino-acid polypeptide reads, in one-letter code: Aminoglycoside 6-adenylyltransferase (282 aa).

It catalyses the reaction streptomycin + ATP = 6-O-adenylylstreptomycin + diphosphate. In terms of biological role, required for streptomycin resistance. Adenylates streptomycin on the O-6 residue. This Staphylococcus aureus protein is Aminoglycoside 6-adenylyltransferase.